Reading from the N-terminus, the 84-residue chain is Serine protease inhibitor Kazal-type 2 (84 aa).

An N-terminal signal peptide occupies residues 1 to 23 (MALSVLRLALLLLAVTFAASLIP). The residue at position 24 (glutamine 24) is a Pyrrolidone carboxylic acid. Positions 30–84 (KYRTPNCSQYRLPGCPRHFNPVCGSDMSTYANECTLCMKIREGGHNIKIIRNGPC) constitute a Kazal-like domain. Disulfide bonds link cysteine 36/cysteine 66, cysteine 44/cysteine 63, and cysteine 52/cysteine 84.

Expressed in epididymis (at protein level).

The protein localises to the secreted. It is found in the cytoplasmic vesicle. Its subcellular location is the secretory vesicle. The protein resides in the acrosome. Functionally, as a strong inhibitor of acrosin, it is required for normal spermiogenesis. It probably hinders premature activation of proacrosin and other proteases, thus preventing the cascade of events leading to spermiogenesis defects. May be involved in the regulation of serine protease-dependent germ cell apoptosis. It also inhibits trypsin. This is Serine protease inhibitor Kazal-type 2 (SPINK2) from Homo sapiens (Human).